The following is a 380-amino-acid chain: uncharacterized protein (380 aa).

The first 18 residues, 1 to 18 (MALRHLALLAGLLVGVAS), serve as a signal peptide directing secretion. N-linked (GlcNAc...) asparagine glycosylation is found at N104, N111, and N128. A helical membrane pass occupies residues 148–168 (LFLGTFFISSGLILSVAGFFY). Disordered stretches follow at residues 229–256 (PQTG…QGQG) and 336–380 (RFSG…ISNV). The segment covering 240–249 (PPLPGSPGDP) has biased composition (pro residues). The segment covering 356 to 366 (VRRERPLDRAT) has biased composition (basic and acidic residues).

The protein resides in the membrane. This is an uncharacterized protein from Homo sapiens (Human).